Here is an 84-residue protein sequence, read N- to C-terminus: Delta-thalatoxin-Cad1a (84 aa).

The first 19 residues, 1–19 (MAYLKIVLVALMLVLAVSA), serve as a signal peptide directing secretion. A propeptide spanning residues 20 to 33 (MRRPDQQDQDISVA) is cleaved from the precursor. Cystine bridges form between C38/C78, C40/C68, and C61/C79.

It belongs to the sea anemone sodium channel inhibitory toxin family. Type II subfamily.

The protein localises to the secreted. It is found in the nematocyst. Functionally, binds specifically to the voltage-gated sodium channel (Nav) and delays its inactivation. The protein is Delta-thalatoxin-Cad1a of Cryptodendrum adhaesivum (Adhesive sea anemone).